The chain runs to 595 residues: MPTVSVNKQQLFDLLGKNYTSQEFDELCFEFGMEMDEDTTEEALKTGEEPELKLDISANRYDLLCIEGISQSLNEYLERKERPDYKLSKPTTKLIIDKSTEQIRPFATAAVLRNIKLNEKSYASFIALQDKLHANLCRNRSLVAMGTHDLDSIEGPFHYRALPPKDIKFVPLNQTQEFTGDKLIEFYKSPEQKNNIGRYVHIIEDSPVFPVIMDSKDRVCSLPPLINSEHSKISVNTRNILIDITATDKTKAEIVLNILTTMFSRYCDEPFTVEPVEIVSEHNGQSRLAPNFNDRIMDVSIKYINSCLGLDQSADEIAHCLKKMSLHAVQSKEDKDILHVDIPVTRPDILHACDIMEDAAVGYGFNNLPKGEKLSNANFIAKPLPINKVSDIFRVASSQATWVEVLPLTLCSHDENFKFLRQSDNGDLAVKLANPKTLEYQVVRTTLLPGILKTVKENRKHSLPIKVFETGDVVFKDDKLERKAYNERHWAAIYVGKNSGFEIIQGLLGKIMQTFRTEWIADYGAAASGRGYWIEEDDSVKTYFPGRGAKVMFRSKEGAEPKQIGHLGVLHPEVMMNFDVPFAASFVEVNAEVFL.

The interval 86–90 (KLSKP) is 3'-CCA residue in tRNA. Residues 292–370 (FNDRIMDVSI…VGYGFNNLPK (79 aa)) form the B5 domain. The Mg(2+) site is built by D348, D354, E357, and D358.

Belongs to the phenylalanyl-tRNA synthetase beta subunit family. Type 2 subfamily. Tetramer of two alpha and two beta subunits. Requires Mg(2+) as cofactor.

The protein resides in the cytoplasm. The enzyme catalyses tRNA(Phe) + L-phenylalanine + ATP = L-phenylalanyl-tRNA(Phe) + AMP + diphosphate + H(+). In Saccharomyces cerevisiae (strain ATCC 204508 / S288c) (Baker's yeast), this protein is Phenylalanine--tRNA ligase beta subunit (FRS1).